A 256-amino-acid chain; its full sequence is Protein FixA (256 aa).

This sequence belongs to the ETF beta-subunit/FixA family. As to quaternary structure, heterodimer of FixA and FixB.

It functions in the pathway amine and polyamine metabolism; carnitine metabolism. Required for anaerobic carnitine reduction. May bring reductant to CaiA. The protein is Protein FixA of Escherichia coli O17:K52:H18 (strain UMN026 / ExPEC).